A 41-amino-acid polypeptide reads, in one-letter code: Large ribosomal subunit protein bL36 (41 aa).

It belongs to the bacterial ribosomal protein bL36 family.

The sequence is that of Large ribosomal subunit protein bL36 from Hydrogenovibrio crunogenus (strain DSM 25203 / XCL-2) (Thiomicrospira crunogena).